The sequence spans 124 residues: Outer dense fiber protein 2 (124 aa).

Residues 13–124 adopt a coiled-coil conformation; the sequence is KEDSERLMEQ…EAIMEQLKEL (112 aa).

Belongs to the ODF2 family. In terms of assembly, self-associates. Associates with microtubules and forms a fibrillar structure partially linked to the microtubule network. Interacts through its C-terminus with PLK1. Interacts with ODF1. Interacts with MARK4; the interaction is required for localization of ODF2 to centrioles. Interacts with TSSK4. Interacts with AKNA. Interacts with QRICH2. Interacts with CFAP58. Interacts with BBOF1. Interacts with CCDC38. Interacts with CCDC42. In terms of processing, tyrosine phosphorylated. In terms of tissue distribution, detected in sperm flagella (at protein level).

Its subcellular location is the cytoplasm. The protein resides in the cytoskeleton. It localises to the microtubule organizing center. The protein localises to the centrosome. It is found in the cell projection. Its subcellular location is the cilium. The protein resides in the centriole. It localises to the spindle pole. The protein localises to the flagellum. Seems to be a major component of sperm tail outer dense fibers (ODF). ODFs are filamentous structures located on the outside of the axoneme in the midpiece and principal piece of the mammalian sperm tail and may help to maintain the passive elastic structures and elastic recoil of the sperm tail. May have a modulating influence on sperm motility. Functions as a general scaffold protein that is specifically localized at the distal/subdistal appendages of mother centrioles. Component of the centrosome matrix required for the localization of PLK1 and NIN to the centrosomes. Required for the formation and/or maintenance of normal CETN1 assembly. The polypeptide is Outer dense fiber protein 2 (Mesocricetus auratus (Golden hamster)).